The primary structure comprises 106 residues: Transcription initiation factor IIA subunit 2 (106 aa).

This sequence belongs to the TFIIA subunit 2 family. As to quaternary structure, TFIIA is a heterodimer of the large unprocessed subunit 1 and a small subunit gamma. It was originally believed to be a heterotrimer of an alpha, a beta and a gamma subunit.

The protein localises to the nucleus. TFIIA is a component of the transcription machinery of RNA polymerase II and plays an important role in transcriptional activation. TFIIA in a complex with TBP mediates transcriptional activity. Protein involved in the resistance to X.oryzae. In Oryza sativa subsp. indica (Rice), this protein is Transcription initiation factor IIA subunit 2 (TFIIAy).